Reading from the N-terminus, the 591-residue chain is Serine/threonine-protein kinase Nek2 (591 aa).

Positions 4–258 constitute a Protein kinase domain; that stretch reads YEVLEQIGKG…AAQLLKHPQL (255 aa). ATP-binding positions include 10-18 and lysine 33; that span reads IGKGAFGSA. Aspartate 129 serves as the catalytic Proton acceptor. 3 disordered regions span residues 309–331, 387–408, and 500–534; these read LGNERTVTFSKPSPERNSVSSTR, EPPKTSYNRTYRSELPSKTTPN, and RTDGDNGSDSSGRNATAASSRGSNDSRQQRFDTSS. 2 stretches are compositionally biased toward polar residues: residues 391 to 408 and 504 to 534; these read TSYNRTYRSELPSKTTPN and DNGSDSSGRNATAASSRGSNDSRQQRFDTSS.

Belongs to the protein kinase superfamily. NEK Ser/Thr protein kinase family. NIMA subfamily.

The catalysed reaction is L-seryl-[protein] + ATP = O-phospho-L-seryl-[protein] + ADP + H(+). It catalyses the reaction L-threonyl-[protein] + ATP = O-phospho-L-threonyl-[protein] + ADP + H(+). May be involved in plant development processes. This Oryza sativa subsp. indica (Rice) protein is Serine/threonine-protein kinase Nek2 (NEK2).